The sequence spans 199 residues: Prefoldin subunit 3 (199 aa).

At methionine 1 the chain carries N-acetylmethionine.

The protein belongs to the prefoldin subunit alpha family. In terms of assembly, heterohexamer of two PFD-alpha type and four PFD-beta type subunits.

Functionally, binds specifically to cytosolic chaperonin (c-CPN) and transfers target proteins to it. Binds to nascent polypeptide chain and promotes folding in an environment in which there are many competing pathways for nonnative proteins. The chain is Prefoldin subunit 3 (PAC10) from Saccharomyces cerevisiae (strain ATCC 204508 / S288c) (Baker's yeast).